The primary structure comprises 415 residues: Mitochondrial distribution and morphology protein 12 (415 aa).

Residues 1 to 402 (MSFDINWSEL…WPSWVCFDLN (402 aa)) form the SMP-LTD domain. Residues 53–146 (EITIRHIGDP…PPLTDLRRSR (94 aa)) are disordered. Acidic residues-rich tracts occupy residues 62–75 (PFDD…DDDE) and 92–103 (NSSDDDEDDEYD).

It belongs to the MDM12 family. In terms of assembly, component of the ER-mitochondria encounter structure (ERMES) or MDM complex, composed of MMM1, MDM10, MDM12 and MDM34. An MMM1 homodimer associates with one molecule of MDM12 on each side in a pairwise head-to-tail manner, and the SMP-LTD domains of MMM1 and MDM12 generate a continuous hydrophobic tunnel for phospholipid trafficking.

It localises to the mitochondrion outer membrane. Its subcellular location is the endoplasmic reticulum membrane. Component of the ERMES/MDM complex, which serves as a molecular tether to connect the endoplasmic reticulum (ER) and mitochondria. Components of this complex are involved in the control of mitochondrial shape and protein biogenesis, and function in nonvesicular lipid trafficking between the ER and mitochondria. MDM12 is required for the interaction of the ER-resident membrane protein MMM1 and the outer mitochondrial membrane-resident beta-barrel protein MDM10. The MDM12-MMM1 subcomplex functions in the major beta-barrel assembly pathway that is responsible for biogenesis of all mitochondrial outer membrane beta-barrel proteins, and acts in a late step after the SAM complex. The MDM10-MDM12-MMM1 subcomplex further acts in the TOM40-specific pathway after the action of the MDM12-MMM1 complex. Essential for establishing and maintaining the structure of mitochondria and maintenance of mtDNA nucleoids. In Debaryomyces hansenii (strain ATCC 36239 / CBS 767 / BCRC 21394 / JCM 1990 / NBRC 0083 / IGC 2968) (Yeast), this protein is Mitochondrial distribution and morphology protein 12.